Reading from the N-terminus, the 77-residue chain is Phytosulfokines 5 (77 aa).

The first 24 residues, 1 to 24 (MVKFTTFLCIIALLLCSTLTHASA), serve as a signal peptide directing secretion. A propeptide spanning residues 25–68 (RLNPTSVYPEENSFKKLEQGEVICEGVGEEECFLIRRTLVAHTD) is cleaved from the precursor. Sulfotyrosine is present on residues Y69 and Y71. Positions 74 to 77 (NHNP) are excised as a propeptide.

The protein belongs to the phytosulfokine family. Post-translationally, sulfation is important for activity and for the binding to a putative membrane receptor. PSK-beta is an enzymatic derivative of PSK-alpha. In terms of tissue distribution, expressed in stems, roots, mature leaves and flowers. Most abundant in vascular bundles.

The protein localises to the secreted. Functionally, promotes plant cell differentiation, organogenesis and somatic embryogenesis as well as cell proliferation. May be involved in the low quiescent center cell proliferation. The protein is Phytosulfokines 5 (PSK5) of Arabidopsis thaliana (Mouse-ear cress).